A 705-amino-acid chain; its full sequence is Voltage-dependent calcium channel beta subunit-associated regulatory protein (705 aa).

Residues 1–45 (MQPTATMATAATTTTTTTATVALTTSWDNATGRPTAEPDPILDNY) lie on the Extracellular side of the membrane. A glycan (N-linked (GlcNAc...) asparagine) is linked at Asn-29. A helical; Signal-anchor for type III membrane protein transmembrane segment spans residues 46–66 (VLLVVVMSLFVGGTLVVLSGV). Residues 67-705 (LLLCKRCWDV…APTSPDHSPA (639 aa)) lie on the Cytoplasmic side of the membrane. 2 disordered regions span residues 91–113 (TTTY…EDPE) and 212–284 (GKAL…GSGA). Residues 245–254 (PSASSDSGEG) show a composition bias toward polar residues. Residues 267–284 (GGPGAAAGPGEAGPGSGA) are compositionally biased toward gly residues. Phosphoserine occurs at positions 299 and 304. 4 disordered regions span residues 316–353 (PSQR…DAPQ), 369–436 (FPHP…SYRD), 448–540 (AAAS…RRDY), and 559–655 (HFDD…CPGS). Residues 344-353 (TEQEEGDAPQ) show a composition bias toward acidic residues. Positions 371–382 (HPRPFLASPPPA) are enriched in pro residues. The span at 383 to 397 (LGRLEAAEAAGGASP) shows a compositional bias: low complexity. Residues 479-488 (AFPPPSPPAP) are compositionally biased toward pro residues. Positions 489-499 (RPKDGEARRLL) are enriched in basic and acidic residues. A phosphoserine mark is found at Ser-507 and Ser-528. A compositionally biased stretch (basic residues) spans 567–585 (ARHRARAHPHARKQWQRGR). The span at 591-614 (GARAAPALAGTPAPPAGAARPARA) shows a compositional bias: low complexity. Ser-621 is subject to Phosphoserine. At Thr-698 the chain carries Phosphothreonine. Phosphoserine occurs at positions 699 and 703.

In terms of assembly, interacts with voltage-dependent calcium channels CACNB1, CACNB2, CACNB3 and CACNB4 beta subunits; prevents their interaction with the CACNA1C alpha subunit thereby negatively regulating the activity of the corresponding calcium channels.

It localises to the cytoplasmic vesicle. The protein localises to the secretory vesicle. The protein resides in the synaptic vesicle membrane. It is found in the cell membrane. Its subcellular location is the cell projection. It localises to the growth cone. In terms of biological role, negatively regulates voltage-gated calcium channels by preventing the interaction between their alpha and beta subunits. Thereby, negatively regulates calcium channels activity at the plasma membrane and indirectly inhibits calcium-regulated exocytosis. The polypeptide is Voltage-dependent calcium channel beta subunit-associated regulatory protein (Homo sapiens (Human)).